Reading from the N-terminus, the 401-residue chain is Renin-2 (401 aa).

The N-terminal stretch at 1–25 is a signal peptide; it reads MDRRRMPLWALLLLWSPCTFSLPTG. Residues 26 to 63 constitute a propeptide, activation peptide; that stretch reads TTFERIPLKKMPSVREILEERGVDMTRLSAEWDVFTKR. The Peptidase A1 domain maps to 83 to 398; that stretch reads YYGEIGIGTP…DRHNNRIGFA (316 aa). Asp101 is an active-site residue. 2 disulfides stabilise this stretch: Cys114–Cys121 and Cys277–Cys281. The active site involves Asp286. Cys320 and Cys357 are oxidised to a cystine.

It belongs to the peptidase A1 family. As to quaternary structure, dimer of a heavy chain and a light chain joined by a disulfide bond. Submandibular gland.

The protein resides in the secreted. It catalyses the reaction Cleavage of Leu-|-Xaa bond in angiotensinogen to generate angiotensin I.. Its function is as follows. Renin is a highly specific endopeptidase, related to pepsin, whose only known function is to generate angiotensin I from angiotensinogen in the plasma, initiating a cascade of reactions that produce an elevation of blood pressure and increased sodium retention by the kidney. This is Renin-2 from Mus musculus (Mouse).